Reading from the N-terminus, the 211-residue chain is Protein-L-isoaspartate O-methyltransferase (211 aa).

S62 is a catalytic residue.

The protein belongs to the methyltransferase superfamily. L-isoaspartyl/D-aspartyl protein methyltransferase family.

The protein resides in the cytoplasm. It catalyses the reaction [protein]-L-isoaspartate + S-adenosyl-L-methionine = [protein]-L-isoaspartate alpha-methyl ester + S-adenosyl-L-homocysteine. In terms of biological role, catalyzes the methyl esterification of L-isoaspartyl residues in peptides and proteins that result from spontaneous decomposition of normal L-aspartyl and L-asparaginyl residues. It plays a role in the repair and/or degradation of damaged proteins. The chain is Protein-L-isoaspartate O-methyltransferase from Shewanella pealeana (strain ATCC 700345 / ANG-SQ1).